Reading from the N-terminus, the 199-residue chain is Recombination protein RecR (199 aa).

The C4-type zinc finger occupies 57–72; it reads CEICGNMDTKNICHIC. Residues 80 to 175 form the Toprim domain; it reads STIAIVETVA…KISRLASGIP (96 aa).

This sequence belongs to the RecR family.

Its function is as follows. May play a role in DNA repair. It seems to be involved in an RecBC-independent recombinational process of DNA repair. It may act with RecF and RecO. The chain is Recombination protein RecR from Rickettsia typhi (strain ATCC VR-144 / Wilmington).